An 876-amino-acid polypeptide reads, in one-letter code: Leucine--tRNA ligase (876 aa).

The 'HIGH' region motif lies at 43 to 53; it reads PYPSGRIHMGH. Residues 632 to 636 carry the 'KMSKS' region motif; that stretch reads KMSKS. Residue Lys-635 coordinates ATP.

The protein belongs to the class-I aminoacyl-tRNA synthetase family.

It localises to the cytoplasm. It catalyses the reaction tRNA(Leu) + L-leucine + ATP = L-leucyl-tRNA(Leu) + AMP + diphosphate. This is Leucine--tRNA ligase from Rhizobium etli (strain ATCC 51251 / DSM 11541 / JCM 21823 / NBRC 15573 / CFN 42).